We begin with the raw amino-acid sequence, 508 residues long: Photosystem II CP47 reaction center protein (508 aa).

6 consecutive transmembrane segments (helical) span residues 21 to 36 (AVHI…WAGS), 101 to 115 (IVFS…IWHW), 140 to 156 (GIHL…FGAF), 203 to 218 (IAAG…FHLS), 237 to 252 (VLSS…AFVV), and 457 to 472 (TFAL…HGAR).

The protein belongs to the PsbB/PsbC family. PsbB subfamily. In terms of assembly, PSII is composed of 1 copy each of membrane proteins PsbA, PsbB, PsbC, PsbD, PsbE, PsbF, PsbH, PsbI, PsbJ, PsbK, PsbL, PsbM, PsbT, PsbX, PsbY, PsbZ, Psb30/Ycf12, at least 3 peripheral proteins of the oxygen-evolving complex and a large number of cofactors. It forms dimeric complexes. It depends on Binds multiple chlorophylls. PSII binds additional chlorophylls, carotenoids and specific lipids. as a cofactor.

It is found in the plastid. The protein resides in the chloroplast thylakoid membrane. Functionally, one of the components of the core complex of photosystem II (PSII). It binds chlorophyll and helps catalyze the primary light-induced photochemical processes of PSII. PSII is a light-driven water:plastoquinone oxidoreductase, using light energy to abstract electrons from H(2)O, generating O(2) and a proton gradient subsequently used for ATP formation. The protein is Photosystem II CP47 reaction center protein of Lolium perenne (Perennial ryegrass).